We begin with the raw amino-acid sequence, 228 residues long: MPFRYKRINIENHNKDELKSLDMMLNQNYFYQNKFEEIKKSYLEDRKAQKDPQYLSDPQLRVIVEKYFEKTAWDLLLNYVIGVKETAFYLASSYINGYGVDQDEFLSHLTLAVGVKLGDEKSIKMLDGEETLPAYIQQFADRCIKEIKKHEAEVQNRDVSCEEIMARAKAFDYFVKTNTNHSYYDTIHEKNNASMKHFSYYVEPIIENNSQDHLEPIGESTKCHCEIC.

This is an uncharacterized protein from Rickettsia prowazekii (strain Madrid E).